Consider the following 531-residue polypeptide: T-complex protein 1 subunit zeta (531 aa).

The residue at position 2 (alanine 2) is an N-acetylalanine. An N6-acetyllysine modification is found at lysine 5. Glycine 39 is a binding site for ADP. Glycine 39 provides a ligand contact to ATP. Aspartate 90 lines the Mg(2+) pocket. ADP contacts are provided by glycine 91, threonine 92, threonine 93, serine 94, threonine 158, and lysine 159. ATP is bound by residues glycine 91, threonine 92, and threonine 93. Lysine 199 is subject to N6-acetyllysine. At serine 205 the chain carries Phosphoserine. Lysine 251 is covalently cross-linked (Glycyl lysine isopeptide (Lys-Gly) (interchain with G-Cter in SUMO2)). An N6-acetyllysine mark is found at lysine 287, lysine 365, lysine 377, and lysine 388. Residue alanine 411 coordinates ADP. Positions 411, 412, 496, and 501 each coordinate ATP. Position 496 (aspartate 496) interacts with ADP.

This sequence belongs to the TCP-1 chaperonin family. Component of the chaperonin-containing T-complex (TRiC), a hexadecamer composed of two identical back-to-back stacked rings enclosing a protein folding chamber. Each ring is made up of eight different subunits: TCP1/CCT1, CCT2, CCT3, CCT4, CCT5, CCT6A/CCT6, CCT7, CCT8. Interacts with PACRG.

The protein resides in the cytoplasm. The enzyme catalyses ATP + H2O = ADP + phosphate + H(+). In terms of biological role, component of the chaperonin-containing T-complex (TRiC), a molecular chaperone complex that assists the folding of actin, tubulin and other proteins upon ATP hydrolysis. The TRiC complex mediates the folding of WRAP53/TCAB1, thereby regulating telomere maintenance. The sequence is that of T-complex protein 1 subunit zeta (CCT6A) from Bos taurus (Bovine).